We begin with the raw amino-acid sequence, 499 residues long: Probable malate:quinone oxidoreductase 4 (499 aa).

This sequence belongs to the MQO family. FAD is required as a cofactor.

The catalysed reaction is (S)-malate + a quinone = a quinol + oxaloacetate. The protein operates within carbohydrate metabolism; tricarboxylic acid cycle; oxaloacetate from (S)-malate (quinone route): step 1/1. The protein is Probable malate:quinone oxidoreductase 4 of Staphylococcus epidermidis (strain ATCC 12228 / FDA PCI 1200).